A 274-amino-acid polypeptide reads, in one-letter code: Protein YeeZ (274 aa).

The first 24 residues, 1–24, serve as a signal peptide directing secretion; it reads MKKVAIVGLGWLGMPLAMSLSARG. Residue 170–177 coordinates ATP; that stretch reads GRFFAGKT.

The chain is Protein YeeZ (yeeZ) from Escherichia coli O157:H7.